A 336-amino-acid polypeptide reads, in one-letter code: Probable long-chain-alcohol O-fatty-acyltransferase 8 (336 aa).

8 helical membrane-spanning segments follow: residues 7-27 (SFVK…YIPS), 38-58 (SVLP…FTIF), 59-79 (SSTT…LFAF), 82-102 (GPLL…CLPI), 117-135 (WVFF…VHNY), 152-172 (LYLV…IILG), 228-248 (MGCW…YFYI), and 284-304 (PMLS…FLFF).

It belongs to the wax synthase family.

It is found in the membrane. The enzyme catalyses a long chain fatty alcohol + a fatty acyl-CoA = a wax ester + CoA. Catalyzes the final step in the synthesis of long-chain linear esters (waxes). This Arabidopsis thaliana (Mouse-ear cress) protein is Probable long-chain-alcohol O-fatty-acyltransferase 8.